Here is a 274-residue protein sequence, read N- to C-terminus: Octanoyltransferase LipM (274 aa).

Residues 32–244 form the BPL/LPL catalytic domain; the sequence is GEVPPTLRFY…GFARALGLTL (213 aa). Residue Cys-146 is the Acyl-thioester intermediate of the active site.

Belongs to the octanoyltransferase LipM family. In terms of assembly, monomer.

It carries out the reaction octanoyl-[ACP] + L-lysyl-[protein] = N(6)-octanoyl-L-lysyl-[protein] + holo-[ACP] + H(+). It functions in the pathway protein modification; protein lipoylation via endogenous pathway; protein N(6)-(lipoyl)lysine from octanoyl-[acyl-carrier-protein]. Functionally, catalyzes the transfer of endogenously produced octanoic acid from octanoyl-acyl-carrier-protein onto the lipoyl domain of GcvH, an intermediate carrier during protein lipoylation. The polypeptide is Octanoyltransferase LipM (Symbiobacterium thermophilum (strain DSM 24528 / JCM 14929 / IAM 14863 / T)).